The sequence spans 370 residues: Capsular polysaccharide phosphotransferase (370 aa).

This sequence belongs to the stealth family.

Functionally, part of a capsular polysaccharide synthesis locus. This is Capsular polysaccharide phosphotransferase from Actinobacillus suis.